A 402-amino-acid chain; its full sequence is Triose phosphate/phosphate translocator, chloroplastic (402 aa).

Residues 1 to 72 (MESRVLSRAT…KGASLLRPCP (72 aa)) constitute a chloroplast transit peptide. Topologically, residues 73–96 (ATAGGNDSAGEEKVAPVGFFSRYP) are chloroplast intermembrane. Residues 97–117 (ALTTGFFFFTWYFLNVIFNIL) traverse the membrane as a helical segment. Residues 118–129 (NKKIYNYFPYPY) are Lumenal-facing. Residues 130 to 150 (FVSVIHLAVGVVYCLVSWTVG) form a helical membrane-spanning segment. The Chloroplast intermembrane portion of the chain corresponds to 151-207 (LPKRAPIDGNLLKLLIPVAVCHALGHVTSNVSFAAVAVSFTHTVKALEPFFNAAASQ). Residues 208 to 228 (FILGQSIPITLWLSLAPVVIG) traverse the membrane as a helical segment. Over 229-272 (VSMASLTELSFNWLGFISAMISNISFTYRSIYSKKAMTDMDSTN) the chain is Lumenal. A helical transmembrane segment spans residues 273-292 (IYAYISIIALIVCIPPALII). Residues 293–370 (EGPTLLKTGF…IIFGNKISTQ (78 aa)) are Chloroplast intermembrane-facing. Residues 371-391 (TGIGTGIAIAGVALYSFIKAQ) form a helical membrane-spanning segment. Topologically, residues 392-402 (IEEEKRQAKAA) are lumenal.

This sequence belongs to the TPT transporter family. TPT (TC 2.A.7.9) subfamily. Homodimer.

The protein localises to the plastid. It localises to the chloroplast membrane. Mediates the export of fixed carbons from the chloroplasts into the cytosol in the form of triose phosphates. The sequence is that of Triose phosphate/phosphate translocator, chloroplastic from Pisum sativum (Garden pea).